Consider the following 180-residue polypeptide: 3-hydroxyanthranilate 3,4-dioxygenase (180 aa).

Position 46 (Arg46) interacts with O2. His50, Glu56, and His94 together coordinate Fe cation. Substrate is bound at residue Glu56. Residues Arg98 and Glu109 each contribute to the substrate site. Cys124, Cys127, Cys161, and Cys164 together coordinate Fe cation.

The protein belongs to the 3-HAO family. Homodimer. Fe(2+) is required as a cofactor.

It catalyses the reaction 3-hydroxyanthranilate + O2 = (2Z,4Z)-2-amino-3-carboxymuconate 6-semialdehyde. It functions in the pathway cofactor biosynthesis; NAD(+) biosynthesis; quinolinate from L-kynurenine: step 3/3. Functionally, catalyzes the oxidative ring opening of 3-hydroxyanthranilate to 2-amino-3-carboxymuconate semialdehyde, which spontaneously cyclizes to quinolinate. In Jannaschia sp. (strain CCS1), this protein is 3-hydroxyanthranilate 3,4-dioxygenase.